Here is a 316-residue protein sequence, read N- to C-terminus: Acetyl-coenzyme A carboxylase carboxyl transferase subunit beta (316 aa).

The CoA carboxyltransferase N-terminal domain maps to 39–308 (LWHKCSKCGV…TPPMVLWETM (270 aa)). The Zn(2+) site is built by cysteine 43, cysteine 46, cysteine 62, and cysteine 65. The C4-type zinc-finger motif lies at 43–65 (CSKCGVLTYTKDLRANQMVCVEC).

This sequence belongs to the AccD/PCCB family. Acetyl-CoA carboxylase is a heterohexamer composed of biotin carboxyl carrier protein (AccB), biotin carboxylase (AccC) and two subunits each of ACCase subunit alpha (AccA) and ACCase subunit beta (AccD). It depends on Zn(2+) as a cofactor.

It is found in the cytoplasm. It catalyses the reaction N(6)-carboxybiotinyl-L-lysyl-[protein] + acetyl-CoA = N(6)-biotinyl-L-lysyl-[protein] + malonyl-CoA. It functions in the pathway lipid metabolism; malonyl-CoA biosynthesis; malonyl-CoA from acetyl-CoA: step 1/1. Component of the acetyl coenzyme A carboxylase (ACC) complex. Biotin carboxylase (BC) catalyzes the carboxylation of biotin on its carrier protein (BCCP) and then the CO(2) group is transferred by the transcarboxylase to acetyl-CoA to form malonyl-CoA. The chain is Acetyl-coenzyme A carboxylase carboxyl transferase subunit beta from Trichormus variabilis (strain ATCC 29413 / PCC 7937) (Anabaena variabilis).